Reading from the N-terminus, the 500-residue chain is Aspartyl/glutamyl-tRNA(Asn/Gln) amidotransferase subunit B (500 aa).

This sequence belongs to the GatB/GatE family. GatB subfamily. Heterotrimer of A, B and C subunits.

The enzyme catalyses L-glutamyl-tRNA(Gln) + L-glutamine + ATP + H2O = L-glutaminyl-tRNA(Gln) + L-glutamate + ADP + phosphate + H(+). It catalyses the reaction L-aspartyl-tRNA(Asn) + L-glutamine + ATP + H2O = L-asparaginyl-tRNA(Asn) + L-glutamate + ADP + phosphate + 2 H(+). In terms of biological role, allows the formation of correctly charged Asn-tRNA(Asn) or Gln-tRNA(Gln) through the transamidation of misacylated Asp-tRNA(Asn) or Glu-tRNA(Gln) in organisms which lack either or both of asparaginyl-tRNA or glutaminyl-tRNA synthetases. The reaction takes place in the presence of glutamine and ATP through an activated phospho-Asp-tRNA(Asn) or phospho-Glu-tRNA(Gln). This is Aspartyl/glutamyl-tRNA(Asn/Gln) amidotransferase subunit B from Clavibacter michiganensis subsp. michiganensis (strain NCPPB 382).